The primary structure comprises 397 residues: Subtilisin-like protease 12 (397 aa).

An N-terminal signal peptide occupies residues 1–19 (MSIFKMMLIYFAILWVVNA). Positions 20–116 (AQLLDIDPQG…VEPNKEMQVA (97 aa)) are excised as a propeptide. Positions 35 to 115 (YIVVMKDRVS…FVEPNKEMQV (81 aa)) constitute an Inhibitor I9 domain. N-linked (GlcNAc...) asparagine glycosylation is found at N123, N136, and N150. The Peptidase S8 domain occupies 125–397 (TWGLSRISHK…NKLLYNGSGA (273 aa)). Residues D157 and H188 each act as charge relay system in the active site. Residues N249, N305, and N334 are each glycosylated (N-linked (GlcNAc...) asparagine). The Charge relay system role is filled by S343. N-linked (GlcNAc...) asparagine glycans are attached at residues N385 and N393.

Belongs to the peptidase S8 family.

The protein resides in the secreted. Functionally, secreted subtilisin-like serine protease with keratinolytic activity that contributes to pathogenicity. This chain is Subtilisin-like protease 12 (SUB12), found in Trichophyton verrucosum (strain HKI 0517).